Consider the following 1150-residue polypeptide: Pyruvate carboxylase (1150 aa).

The region spanning 3–455 is the Biotin carboxylation domain; that stretch reads QIKKLLVANR…TTKFIEETPE (453 aa). The ATP site is built by Lys-119, Lys-161, His-211, and Glu-278. The ATP-grasp domain maps to 123–319; that stretch reads RTTAIKADLP…IVKTQILVAA (197 aa). The active site involves Arg-294. The region spanning 533-802 is the Pyruvate carboxyltransferase domain; that stretch reads VLLTDTTFRD…HLRTDIEGME (270 aa). 541 to 545 contributes to the substrate binding site; it reads RDAHQ. Mn(2+) contacts are provided by Asp-542, Lys-712, His-741, and His-743. The residue at position 712 (Lys-712) is an N6-carboxylysine. The Biotinyl-binding domain occupies 1071–1146; the sequence is KADKSNPSHI…ATGDLLIEIE (76 aa). Lys-1112 bears the N6-biotinyllysine mark.

Homotetramer. It depends on biotin as a cofactor.

It catalyses the reaction hydrogencarbonate + pyruvate + ATP = oxaloacetate + ADP + phosphate + H(+). Catalyzes a 2-step reaction, involving the ATP-dependent carboxylation of the covalently attached biotin in the first step and the transfer of the carboxyl group to pyruvate in the second. The protein is Pyruvate carboxylase (pycA) of Staphylococcus aureus (strain Mu50 / ATCC 700699).